The following is a 404-amino-acid chain: Zinc metalloprotease Rip1 (404 aa).

The helical transmembrane segment at 1 to 21 (MMFVTGIVLFALAILISVALH) threads the bilayer. Histidine 21 is a Zn(2+) binding site. Glutamate 22 is an active-site residue. Histidine 25 is a Zn(2+) binding site. The chain crosses the membrane as a helical span at residues 104–124 (PGMNLAICLVLIYAIALVWGL). One can recognise a PDZ domain in the interval 121 to 203 (VWGLPNLHPP…SVPIVVERDG (83 aa)). Residue aspartate 202 participates in Zn(2+) binding. Transmembrane regions (helical) follow at residues 313–333 (LWVAFWFFLAQLNLILAAINL) and 373–393 (LLPATYVVLVLVVGYMLLTVT).

Belongs to the peptidase M50B family. Zn(2+) is required as a cofactor.

The protein resides in the cell membrane. Its function is as follows. A probable site-2 protease (S2P) that cleaves type-2 transmembrane proteins within their membrane-spanning domains. Degrades anti-sigma factors RskA, RslA and RsmA, releasing sigma factors SigK, SigL and SigM from the cellular membrane, activating signaling pathways. Does not act on RsdA. Regulates the composition of extractable mycolic acids in the cell envelope in response to changes in membrane fluidity. Mediates transcriptional regulation of mycolic acid biosynthetic genes in response to detergent. Probably also cleaves PbpB (PBP3, FtsI); this cleavage is inhibited by Wag31-PbpBI interaction. Functionally, regulated intramembrane proteolysis (RIP) occurs when an extracytoplasmic signal (possibly oxidative stress) triggers a concerted proteolytic cascade to transmit information and elicit cellular responses. The membrane-spanning regulatory substrate protein (includes anti-sigma factors RskA, RslA, RsmA, and PbpB) is first cut extracytoplasmically (site-1 protease, S1P), then within the membrane itself (site-2 protease, S2P, this entry), while cytoplasmic proteases finish degrading the regulatory protein, liberating the effector protein (ECF sigma factors SigK, SigL and SigM). The protein is Zinc metalloprotease Rip1 (rip1) of Mycobacterium tuberculosis (strain ATCC 35801 / TMC 107 / Erdman).